The following is a 105-amino-acid chain: MKYAIVEISGRQFWIETGKYYDFNRIPTELGKQITLNRVLLLNNEGEILIGKPYLDSVKIKGKILEHLRGKKTIVYKMRPKKKTRKKQGHRQELTRVLIEDIIIN.

Belongs to the bacterial ribosomal protein bL21 family. Part of the 50S ribosomal subunit.

Its subcellular location is the plastid. The protein localises to the chloroplast. This protein binds to 23S rRNA. This Phaeodactylum tricornutum (strain CCAP 1055/1) protein is Large ribosomal subunit protein bL21c.